Reading from the N-terminus, the 402-residue chain is Argininosuccinate synthase (402 aa).

ATP is bound by residues 13–21 (AYSGGLDTS) and alanine 40. L-citrulline is bound by residues tyrosine 91 and serine 96. An ATP-binding site is contributed by glycine 121. L-aspartate contacts are provided by threonine 123, asparagine 127, and aspartate 128. L-citrulline is bound at residue asparagine 127. Residues arginine 131, serine 180, serine 189, glutamate 265, and tyrosine 277 each coordinate L-citrulline.

It belongs to the argininosuccinate synthase family. Type 1 subfamily. In terms of assembly, homotetramer.

The protein localises to the cytoplasm. The enzyme catalyses L-citrulline + L-aspartate + ATP = 2-(N(omega)-L-arginino)succinate + AMP + diphosphate + H(+). Its pathway is amino-acid biosynthesis; L-arginine biosynthesis; L-arginine from L-ornithine and carbamoyl phosphate: step 2/3. This is Argininosuccinate synthase from Leptospira biflexa serovar Patoc (strain Patoc 1 / Ames).